A 322-amino-acid chain; its full sequence is Ethylmalonyl-CoA decarboxylase (322 aa).

Lys232 is subject to N6-acetyllysine; alternate. Residue Lys232 is modified to N6-succinyllysine; alternate. The residue at position 316 (Lys316) is an N6-succinyllysine.

Belongs to the enoyl-CoA hydratase/isomerase family.

The protein resides in the cytoplasm. Its subcellular location is the cytosol. The catalysed reaction is (2S)-ethylmalonyl-CoA + H(+) = butanoyl-CoA + CO2. It carries out the reaction (S)-methylmalonyl-CoA + H(+) = propanoyl-CoA + CO2. The enzyme catalyses (2R)-ethylmalonyl-CoA + H(+) = butanoyl-CoA + CO2. Its function is as follows. Decarboxylates ethylmalonyl-CoA, a potentially toxic metabolite, to form butyryl-CoA, suggesting it might be involved in metabolite proofreading. Acts preferentially on (S)-ethylmalonyl-CoA but also has some activity on the (R)-isomer. Also has methylmalonyl-CoA decarboxylase activity at lower level. The chain is Ethylmalonyl-CoA decarboxylase (Echdc1) from Mus musculus (Mouse).